The primary structure comprises 223 residues: Transmembrane protein 126 (223 aa).

The Mitochondrial matrix portion of the chain corresponds to 1-39; the sequence is MALSRAKPDELPRDAVVITEDQALKYQWKIITSWDKIGE. A helical transmembrane segment spans residues 40 to 62; the sequence is VWSLRYTPGILSALAAGTGAYIN. Topologically, residues 63 to 78 are mitochondrial intermembrane; sequence NHYRTKLRLGGHGRLS. The helical transmembrane segment at 79 to 99 threads the bilayer; the sequence is TYLPIVAVPAIFTMLAHKFFI. At 100–123 the chain is on the mitochondrial matrix side; that stretch reads QRPILLNPLGECPVCIQMRSAAFQ. The helical transmembrane segment at 124–144 threads the bilayer; that stretch reads TSLGIVYPTILAPFAAFLFAT. Over 145–171 the chain is Mitochondrial intermembrane; it reads RCYTYRIPSITENPREVFLLWRKFTRP. The helical transmembrane segment at 172-192 threads the bilayer; that stretch reads IVPALGTLIGLQALLTMFLTG. At 193–223 the chain is on the mitochondrial matrix side; it reads QEDKQNFKLMLRMREIEHQVEEEHLPQRMDF.

The protein belongs to the TMEM126 family. In terms of assembly, associates with mitochondrial complex I assembly intermediates during its biogenesis.

It is found in the mitochondrion membrane. Functionally, as part of the MCIA complex, involved in the assembly of the mitochondrial complex I. The sequence is that of Transmembrane protein 126 from Drosophila melanogaster (Fruit fly).